The following is a 2163-amino-acid chain: Myosin-VIIa (2163 aa).

Residues 58–728 (QGVEDMISLG…HDLFLEQERD (671 aa)) enclose the Myosin motor domain. Position 151-158 (151-158 (GESGAGKT)) interacts with ATP. Actin-binding regions lie at residues 607–629 (LDSL…KPNE) and 707–721 (QLGH…AHDL). 4 IQ domains span residues 731–753 (LTRK…RFLR), 754–783 (MRQA…GYMR), 800–822 (LRGH…EYGL), and 823–852 (KMWA…EYRR). Positions 886-914 (RLNEIERKEIEQELEERRRVEVKKNIIND) form a coiled coil. Residues 937-958 (PDSSSEAPTPHGGRETSVFNDL) form a disordered region. The 237-residue stretch at 1003–1239 (YSRKPLKHPL…PSWLELQATK (237 aa)) folds into the MyTH4 1 domain. The region spanning 1244 to 1554 (IMLPITFMDG…YFLEGLKKRS (311 aa)) is the FERM 1 domain. One can recognise an SH3 domain in the interval 1552-1621 (KRSKFVIALQ…PAEIVYVLPS (70 aa)). A MyTH4 2 domain is found at 1697-1845 (YSREPLKQPL…PHQVEVEAIQ (149 aa)). Residues 1851 to 2154 (IFHKVYFPDD…SYISLMLTNM (304 aa)) enclose the FERM 2 domain.

This sequence belongs to the TRAFAC class myosin-kinesin ATPase superfamily. Myosin family. As to quaternary structure, homodimerizes in a two headed molecule through the formation of a coiled-coil rod.

The protein localises to the cytoplasm. Functionally, myosins are actin-based motor molecules with ATPase activity. Unconventional myosins serve in intracellular movements: can function in cells as a single-molecule cargo transporter. A very slow and high-duty-ratio motor, may be suitable for tension maintenance of actin filaments. Their highly divergent tails are presumed to bind to membranous compartments, which would be moved relative to actin filaments. Plays a key role in the formation of cellular projections and other actin-based functions required for embryonic and larval viability. Necessary for auditory transduction: plays a role in Johnston organ (JO) organization by functioning in scolopidial apical attachment and therefore to acoustic stimulus propagation from the antenna a2/a3 joint to transducing elements. This is Myosin-VIIa from Aedes aegypti (Yellowfever mosquito).